The sequence spans 644 residues: Exoribonuclease 2 (644 aa).

One can recognise an RNB domain in the interval 189 to 516; it reads REDLTALDFV…NHRLLKAVIK (328 aa). In terms of domain architecture, S1 motif spans 561-643; sequence DTRFAAEIVD…ETRSIIARPV (83 aa).

It belongs to the RNR ribonuclease family. RNase II subfamily.

It localises to the cytoplasm. It catalyses the reaction Exonucleolytic cleavage in the 3'- to 5'-direction to yield nucleoside 5'-phosphates.. Involved in mRNA degradation. Hydrolyzes single-stranded polyribonucleotides processively in the 3' to 5' direction. The polypeptide is Exoribonuclease 2 (Escherichia coli O8 (strain IAI1)).